The following is a 1113-amino-acid chain: Carbamoyl phosphate synthase large chain (1113 aa).

The carboxyphosphate synthetic domain stretch occupies residues 1–407 (MPKRSDINHV…ALNKALRSLE (407 aa)). ATP is bound by residues Arg-134, Arg-174, Gly-180, Gly-181, Glu-213, Ile-215, Glu-220, Gly-246, Val-247, His-248, Gln-290, and Glu-304. The 196-residue stretch at 138 to 333 (KDIVTTIGGE…IAKMAAKLAI (196 aa)) folds into the ATP-grasp 1 domain. Mg(2+)-binding residues include Gln-290, Glu-304, and Asn-306. Mn(2+) contacts are provided by Gln-290, Glu-304, and Asn-306. The tract at residues 408-565 (TKQQGFWTKP…ELDPAAESEV (158 aa)) is oligomerization domain. Positions 566–967 (APQTEREKVL…AYAKAEAGAF (402 aa)) are carbamoyl phosphate synthetic domain. The region spanning 695-886 (GALLNREQLP…LAKAASRIAV (192 aa)) is the ATP-grasp 2 domain. Arg-731, Arg-770, Leu-772, Glu-777, Gly-802, Ile-803, His-804, Ser-805, Gln-845, and Glu-857 together coordinate ATP. Mg(2+)-binding residues include Gln-845, Glu-857, and Asn-859. Residues Gln-845, Glu-857, and Asn-859 each contribute to the Mn(2+) site. One can recognise an MGS-like domain in the interval 968-1113 (GALPTEGTVF…LQELDHAVKA (146 aa)). Residues 968–1113 (GALPTEGTVF…LQELDHAVKA (146 aa)) form an allosteric domain region.

The protein belongs to the CarB family. As to quaternary structure, composed of two chains; the small (or glutamine) chain promotes the hydrolysis of glutamine to ammonia, which is used by the large (or ammonia) chain to synthesize carbamoyl phosphate. Tetramer of heterodimers (alpha,beta)4. Requires Mg(2+) as cofactor. The cofactor is Mn(2+).

The enzyme catalyses hydrogencarbonate + L-glutamine + 2 ATP + H2O = carbamoyl phosphate + L-glutamate + 2 ADP + phosphate + 2 H(+). It carries out the reaction hydrogencarbonate + NH4(+) + 2 ATP = carbamoyl phosphate + 2 ADP + phosphate + 2 H(+). It participates in amino-acid biosynthesis; L-arginine biosynthesis; carbamoyl phosphate from bicarbonate: step 1/1. The protein operates within pyrimidine metabolism; UMP biosynthesis via de novo pathway; (S)-dihydroorotate from bicarbonate: step 1/3. Functionally, large subunit of the glutamine-dependent carbamoyl phosphate synthetase (CPSase). CPSase catalyzes the formation of carbamoyl phosphate from the ammonia moiety of glutamine, carbonate, and phosphate donated by ATP, constituting the first step of 2 biosynthetic pathways, one leading to arginine and/or urea and the other to pyrimidine nucleotides. The large subunit (synthetase) binds the substrates ammonia (free or transferred from glutamine from the small subunit), hydrogencarbonate and ATP and carries out an ATP-coupled ligase reaction, activating hydrogencarbonate by forming carboxy phosphate which reacts with ammonia to form carbamoyl phosphate. The protein is Carbamoyl phosphate synthase large chain of Corynebacterium glutamicum (strain ATCC 13032 / DSM 20300 / JCM 1318 / BCRC 11384 / CCUG 27702 / LMG 3730 / NBRC 12168 / NCIMB 10025 / NRRL B-2784 / 534).